A 114-amino-acid polypeptide reads, in one-letter code: Ribosome-binding factor A (114 aa).

This sequence belongs to the RbfA family. In terms of assembly, monomer. Binds 30S ribosomal subunits, but not 50S ribosomal subunits or 70S ribosomes.

It is found in the cytoplasm. One of several proteins that assist in the late maturation steps of the functional core of the 30S ribosomal subunit. Associates with free 30S ribosomal subunits (but not with 30S subunits that are part of 70S ribosomes or polysomes). Required for efficient processing of 16S rRNA. May interact with the 5'-terminal helix region of 16S rRNA. The protein is Ribosome-binding factor A of Vesicomyosocius okutanii subsp. Calyptogena okutanii (strain HA).